The chain runs to 425 residues: Serine--tRNA ligase (425 aa).

231-233 (TAE) contributes to the L-serine binding site. 262-264 (RSE) is a binding site for ATP. Residue glutamate 285 participates in L-serine binding. ATP is bound at residue 349–352 (EISS). Position 385 (serine 385) interacts with L-serine.

Belongs to the class-II aminoacyl-tRNA synthetase family. Type-1 seryl-tRNA synthetase subfamily. In terms of assembly, homodimer. The tRNA molecule binds across the dimer.

Its subcellular location is the cytoplasm. The enzyme catalyses tRNA(Ser) + L-serine + ATP = L-seryl-tRNA(Ser) + AMP + diphosphate + H(+). It catalyses the reaction tRNA(Sec) + L-serine + ATP = L-seryl-tRNA(Sec) + AMP + diphosphate + H(+). The protein operates within aminoacyl-tRNA biosynthesis; selenocysteinyl-tRNA(Sec) biosynthesis; L-seryl-tRNA(Sec) from L-serine and tRNA(Sec): step 1/1. Its function is as follows. Catalyzes the attachment of serine to tRNA(Ser). Is also able to aminoacylate tRNA(Sec) with serine, to form the misacylated tRNA L-seryl-tRNA(Sec), which will be further converted into selenocysteinyl-tRNA(Sec). This is Serine--tRNA ligase from Maricaulis maris (strain MCS10) (Caulobacter maris).